A 279-amino-acid chain; its full sequence is Dehydrogenase/reductase SDR family member 4 (279 aa).

Leu-37 to Val-61 serves as a coordination point for NADP(+). The residue at position 93 (Lys-93) is an N6-acetyllysine; alternate. Lys-93 is subject to N6-succinyllysine; alternate. Position 106 is an N6-acetyllysine (Lys-106). Residue Ser-170 coordinates substrate. The Proton acceptor role is filled by Tyr-183. Lys-187 serves as a coordination point for NADP(+). Lys-217 carries the N6-acetyllysine; alternate modification. Position 217 is an N6-succinyllysine; alternate (Lys-217). A Phosphoserine modification is found at Ser-221. Residues Lys-228 and Lys-235 each carry the N6-succinyllysine modification. The Peroxisomal targeting signal motif lies at Ser-277–Leu-279.

Belongs to the short-chain dehydrogenases/reductases (SDR) family. In terms of assembly, homotetramer.

Its subcellular location is the peroxisome. It carries out the reaction a secondary alcohol + NADP(+) = a ketone + NADPH + H(+). The enzyme catalyses 3alpha-hydroxy-5beta-pregnan-20-one + NADP(+) = 5beta-pregnan-3,20-dione + NADPH + H(+). It catalyses the reaction 5beta-dihydrotestosterone + NADPH + H(+) = 5beta-androstane-3alpha,17beta-diol + NADP(+). The catalysed reaction is all-trans-retinol + NADP(+) = all-trans-retinal + NADPH + H(+). It carries out the reaction isatin + NADPH + H(+) = 3-hydroxyindolin-2-one + NADP(+). NADPH-dependent oxidoreductase which catalyzes the reduction of a variety of compounds bearing carbonyl groups including ketosteroids, alpha-dicarbonyl compounds, aldehydes, aromatic ketones and quinones. Reduces all-trans-retinal and 9-cis retinal. Reduces 3-ketosteroids and benzil into 3alpha-hydroxysteroids and S-benzoin, respectively, in contrast to the stereoselectivity of primates DHRS4s which produce 3beta-hydroxysteroids and R-benzoin. In the reverse reaction, catalyzes the NADP-dependent oxidation of 3alpha-hydroxysteroids and alcohol, but with much lower efficiency. Involved in the metabolism of 3alpha-hydroxysteroids, retinoid, isatin and xenobiotic carbonyl compounds. In Mus musculus (Mouse), this protein is Dehydrogenase/reductase SDR family member 4.